The following is a 554-amino-acid chain: Perforin-1 (554 aa).

An N-terminal signal peptide occupies residues 1-20; the sequence is MATCLFLLGLFLLLPRPVPA. Intrachain disulfides connect Cys22–Cys75, Cys30–Cys72, and Cys101–Cys175. Residues 26–374 enclose the MACPF domain; that stretch reads TRSECKQKHK…HYIMSRARWQ (349 aa). The chain crosses the membrane as a beta stranded span at residues 128-148; that stretch reads WRVGLDVNPRPEANMRASVAG. A glycan (N-linked (GlcNAc...) asparagine) is linked at Asn204. 4 cysteine pairs are disulfide-bonded: Cys241–Cys407, Cys376–Cys392, Cys380–Cys394, and Cys396–Cys406. Residues 256-278 form a beta stranded membrane-spanning segment; it reads CLNVEAQVSIGAQASVSSEYKAC. Residue Asn375 is glycosylated (N-linked (GlcNAc...) asparagine). The 33-residue stretch at 375–407 folds into the EGF-like domain; that stretch reads NCSRPCRSGQHKSSHDSCQCECQDSKVTNQDCC. Positions 395–513 constitute a C2 domain; sequence ECQDSKVTNQ…FHEVTCELNH (119 aa). Residues Gly428, Asp429, Thr432, Ala433, Asp435, Asn454, Glu467, Asp483, Ala484, Asp485, Trp488, Asp489, Asp490, and Asp491 each coordinate Ca(2+). Intrachain disulfides connect Cys496–Cys509 and Cys524–Cys533. Asn548 carries N-linked (GlcNAc...) asparagine glycosylation.

It belongs to the complement C6/C7/C8/C9 family. As to quaternary structure, monomer, as soluble protein. Homooligomer; homooligomerizes to form a pore-forming ring. Ca(2+) is required as a cofactor. N-glycosylated. The glycosylation sites are facing the interior of the pore. Detected in cytotoxic T-lymphocytes and natural killer cells.

It localises to the cytolytic granule. Its subcellular location is the secreted. It is found in the cell membrane. The protein resides in the endosome lumen. In terms of biological role, pore-forming protein that plays a key role in granzyme-mediated programmed cell death, and in defense against virus-infected or neoplastic cells. Can insert into the membrane of target cells in its calcium-bound form, oligomerize and form large pores. Promotes cytolysis and apoptosis of target cells by mediating the passage and uptake of cytotoxic granzymes. Facilitates the delivery of cationic cargo protein, while anionic or neural proteins are not delivered efficiently. Perforin pores allow the release of mature caspase-7 (CASP7) into the extracellular milieu. This Mus musculus (Mouse) protein is Perforin-1 (Prf1).